The following is a 538-amino-acid chain: T-complex protein 1 subunit epsilon (538 aa).

This sequence belongs to the TCP-1 chaperonin family. In terms of assembly, heterooligomeric complex of about 850 to 900 kDa that forms two stacked rings, 12 to 16 nm in diameter.

The protein localises to the cytoplasm. Molecular chaperone; assists the folding of proteins upon ATP hydrolysis. Known to play a role, in vitro, in the folding of actin and tubulin. The polypeptide is T-complex protein 1 subunit epsilon (cct5) (Dictyostelium discoideum (Social amoeba)).